Consider the following 230-residue polypeptide: Ureidoacrylate amidohydrolase RutB (230 aa).

Catalysis depends on Asp-24, which acts as the Proton acceptor. Residue Lys-133 is part of the active site. Residue Cys-166 is the Nucleophile of the active site.

This sequence belongs to the isochorismatase family. RutB subfamily.

It carries out the reaction (Z)-3-ureidoacrylate + H2O + H(+) = (Z)-3-aminoacrylate + NH4(+) + CO2. The catalysed reaction is (Z)-3-ureidoacrylate + H2O = (Z)-3-aminoacrylate + carbamate + H(+). It catalyses the reaction (Z)-2-methylureidoacrylate + H2O + H(+) = (Z)-2-methylaminoacrylate + NH4(+) + CO2. Its function is as follows. Hydrolyzes ureidoacrylate to form aminoacrylate and carbamate. The carbamate hydrolyzes spontaneously, thereby releasing one of the nitrogen atoms of the pyrimidine ring as ammonia and one of its carbon atoms as CO2. The sequence is that of Ureidoacrylate amidohydrolase RutB from Escherichia coli O6:K15:H31 (strain 536 / UPEC).